A 266-amino-acid chain; its full sequence is Putative carbamate hydrolase RutD (266 aa).

It belongs to the AB hydrolase superfamily. Hydrolase RutD family.

The catalysed reaction is carbamate + 2 H(+) = NH4(+) + CO2. In terms of biological role, involved in pyrimidine catabolism. May facilitate the hydrolysis of carbamate, a reaction that can also occur spontaneously. The sequence is that of Putative carbamate hydrolase RutD from Escherichia coli (strain B / BL21-DE3).